We begin with the raw amino-acid sequence, 345 residues long: tRNA-specific 2-thiouridylase MnmA (345 aa).

ATP is bound by residues 6–13 and Leu-32; that span reads AMSGGVDS. Cys-100 serves as the catalytic Nucleophile. Cys-100 and Cys-197 form a disulfide bridge. An ATP-binding site is contributed by Gly-124. The interval 146-148 is interaction with tRNA; sequence RDQ. The active-site Cysteine persulfide intermediate is Cys-197.

This sequence belongs to the MnmA/TRMU family.

The protein localises to the cytoplasm. It carries out the reaction S-sulfanyl-L-cysteinyl-[protein] + uridine(34) in tRNA + AH2 + ATP = 2-thiouridine(34) in tRNA + L-cysteinyl-[protein] + A + AMP + diphosphate + H(+). Its function is as follows. Catalyzes the 2-thiolation of uridine at the wobble position (U34) of tRNA, leading to the formation of s(2)U34. The sequence is that of tRNA-specific 2-thiouridylase MnmA from Acidiphilium cryptum (strain JF-5).